Consider the following 189-residue polypeptide: Dual-action ribosomal maturation protein DarP (189 aa).

Residues 1–22 form a disordered region; that stretch reads MWKNGAMRGCNKETGEFLGPSR.

Belongs to the DarP family.

Its subcellular location is the cytoplasm. Functionally, member of a network of 50S ribosomal subunit biogenesis factors which assembles along the 30S-50S interface, preventing incorrect 23S rRNA structures from forming. Promotes peptidyl transferase center (PTC) maturation. The protein is Dual-action ribosomal maturation protein DarP of Xylella fastidiosa (strain Temecula1 / ATCC 700964).